We begin with the raw amino-acid sequence, 455 residues long: Probable glycine dehydrogenase (decarboxylating) subunit 1 (455 aa).

It belongs to the GcvP family. N-terminal subunit subfamily. The glycine cleavage system is composed of four proteins: P, T, L and H. In this organism, the P 'protein' is a heterodimer of two subunits.

The enzyme catalyses N(6)-[(R)-lipoyl]-L-lysyl-[glycine-cleavage complex H protein] + glycine + H(+) = N(6)-[(R)-S(8)-aminomethyldihydrolipoyl]-L-lysyl-[glycine-cleavage complex H protein] + CO2. Functionally, the glycine cleavage system catalyzes the degradation of glycine. The P protein binds the alpha-amino group of glycine through its pyridoxal phosphate cofactor; CO(2) is released and the remaining methylamine moiety is then transferred to the lipoamide cofactor of the H protein. The sequence is that of Probable glycine dehydrogenase (decarboxylating) subunit 1 from Saccharolobus islandicus (strain Y.N.15.51 / Yellowstone #2) (Sulfolobus islandicus).